Consider the following 708-residue polypeptide: Elongation factor G 1 (708 aa).

A tr-type G domain is found at 9–295 (AKVRNIGIMA…AVVRYLPTPL (287 aa)). GTP contacts are provided by residues 18 to 25 (AHIDAGKT), 86 to 90 (DTPGH), and 140 to 143 (NKLD).

It belongs to the TRAFAC class translation factor GTPase superfamily. Classic translation factor GTPase family. EF-G/EF-2 subfamily.

It is found in the cytoplasm. Its function is as follows. Catalyzes the GTP-dependent ribosomal translocation step during translation elongation. During this step, the ribosome changes from the pre-translocational (PRE) to the post-translocational (POST) state as the newly formed A-site-bound peptidyl-tRNA and P-site-bound deacylated tRNA move to the P and E sites, respectively. Catalyzes the coordinated movement of the two tRNA molecules, the mRNA and conformational changes in the ribosome. This is Elongation factor G 1 (fusA) from Streptomyces coelicolor (strain ATCC BAA-471 / A3(2) / M145).